We begin with the raw amino-acid sequence, 62 residues long: Alpha-toxin Tf4 (62 aa).

Positions 2–62 (KEGYPADSKG…SVWDSATNKC (61 aa)) constitute an LCN-type CS-alpha/beta domain. Cystine bridges form between Cys-12–Cys-62, Cys-16–Cys-38, Cys-24–Cys-43, and Cys-28–Cys-45. Cys-62 is modified (cysteine amide).

As to expression, expressed by the venom gland.

Its subcellular location is the secreted. Its function is as follows. Alpha toxins bind voltage-independently at site-3 of sodium channels (Nav) and inhibit the inactivation of the activated channels, thereby blocking neuronal transmission. This toxin is toxic to frogs but non-toxic to insect larvae (T.molitor), mammals (rats) and crustaceans (crabs) at the doses assayed. The protein is Alpha-toxin Tf4 of Tityus fasciolatus (Central Brazilian scorpion).